The sequence spans 61 residues: uncharacterized protein (61 aa).

The first 28 residues, 1-28, serve as a signal peptide directing secretion; that stretch reads MHRRARRMPMRPRRSKRVRNRYTMGTFA.

This is an uncharacterized protein from Mycobacterium tuberculosis (strain ATCC 25618 / H37Rv).